Consider the following 301-residue polypeptide: MKTKAGFVALIGKPNAGKSTLLNTLLNAHLALVSHKANATRKLMKCIVPFKDKEWYESQIIFLDTPGLHHQEKLLNQCMLSQALKAMGDAELCVFLASVHDDLKGYEEFLSLCQKPHILALSKIDTATHKQVLQKLQEYQQYDSQFLALVPLSAKKSQNLNALLECISQHLSPSAWLFEKDLMSDEKMRDIYKEIIRESLFDFLSDEIPYESDVMIDKFIEEERIDKVYARIIVEKESQKKIVIGKNGVNIKRIGTNARLKMQEVGEKKVFLNLQVIAQKSWSKEEKSLQKLGYIHRRNRD.

Residues 4-173 enclose the Era-type G domain; sequence KAGFVALIGK…LECISQHLSP (170 aa). A G1 region spans residues 12–19; it reads GKPNAGKS. A GTP-binding site is contributed by 12 to 19; the sequence is GKPNAGKS. The G2 stretch occupies residues 38–42; that stretch reads NATRK. Residues 64–67 are G3; the sequence is DTPG. GTP-binding positions include 64-68 and 122-125; these read DTPGL and SKID. The interval 122–125 is G4; that stretch reads SKID. The tract at residues 152 to 154 is G5; the sequence is LSA. Residues 204–280 form the KH type-2 domain; the sequence is LSDEIPYESD…FLNLQVIAQK (77 aa).

This sequence belongs to the TRAFAC class TrmE-Era-EngA-EngB-Septin-like GTPase superfamily. Era GTPase family. As to quaternary structure, monomer.

The protein resides in the cytoplasm. It localises to the cell inner membrane. An essential GTPase that binds both GDP and GTP, with rapid nucleotide exchange. Plays a role in 16S rRNA processing and 30S ribosomal subunit biogenesis and possibly also in cell cycle regulation and energy metabolism. The sequence is that of GTPase Era from Helicobacter pylori (strain ATCC 700392 / 26695) (Campylobacter pylori).